We begin with the raw amino-acid sequence, 238 residues long: Tetraspanin-8 (238 aa).

Residues 1 to 9 (MAGVNVCIK) lie on the Cytoplasmic side of the membrane. The chain crosses the membrane as a helical span at residues 10 to 33 (CSMFIFNFVFWLCGAIILSVAISI). Residues 34-57 (RAGKIGQEILAPGDADLNLFIAVN) are Extracellular-facing. The helical transmembrane segment at 58 to 72 (ILIFVGAVIMILGFL) threads the bilayer. Over 73 to 83 (GCCGAMKENQF) the chain is Cytoplasmic. The helical transmembrane segment at 84–109 (MMILFFVGLLMILLLQVAAGIVATTR) threads the bilayer. The Extracellular portion of the chain corresponds to 110-206 (KSKTEQALNK…ASISQMFSKR (97 aa)). Asn118 is a glycosylation site (N-linked (GlcNAc...) asparagine). Residues 207-231 (LFIVLALAFGLAAIEVLGLIFSIVL) form a helical membrane-spanning segment. The Cytoplasmic segment spans residues 232-238 (YCQMRKK).

The protein belongs to the tetraspanin (TM4SF) family. In terms of assembly, forms homooligomers. Interacts with MEP1B. Interacts with integrin alpha3/ITGA3. Interacts with RICTOR and MTOR. Interacts with ADAM17. Interacts with ECE1.

It is found in the cell membrane. Functionally, structural component of specialized membrane microdomains known as tetraspanin-enriched microdomains (TERMs), which act as platforms for receptor clustering and signaling. Participates thereby in diverse biological functions such as cell signal transduction, migration and protein trafficking. Promotes ADAM17-mediated TNF-alpha processing through recruitment of ADAM17 to tetraspanin-enriched micro-domains (TEMs). Forms a complex with RICTOR and integrin alpha3/ITGA3 to mediate mTORC2 activation and AKT1 phosphorylation leading to cell migration. Reduces apoptosis and autophagy induced by high glucose levels through forming a complex with mTOR and RICTOR. Contributes to the maintenance of intestinal epithelial barrier and plays a role in the regulation of intestine inflammation by switching interferon gamma receptor 1/IFNGR1 from clathrin-dependent to lipid raft-dependent endocytosis route to limit STAT1 activation magnitude and duration. Acts as a modulator of the endothelin axis by associating with endothelin converting enzyme ECE1 and regulating its activity of conversion of the endothelin-1 precursor to endothelin. The chain is Tetraspanin-8 (TSPAN8) from Bos taurus (Bovine).